The chain runs to 157 residues: Eukaryotic translation initiation factor 5A-1 (157 aa).

Residue Ser2 is modified to N-acetylserine. The residue at position 2 (Ser2) is a Phosphoserine. Residues Thr7 and Thr10 each carry the phosphothreonine modification. Hypusine is present on Lys51. The residue at position 74 (Ser74) is a Phosphoserine. Residue Lys86 forms a Glycyl lysine isopeptide (Lys-Gly) (interchain with G-Cter in ubiquitin) linkage.

This sequence belongs to the eIF-5A family. As to quaternary structure, homodimer. Binds to 80S ribosomes. Actively translating ribosomes show mutually exclusive binding of eIF5a (HYP2 or ANB1) and EFT1/eEF2. Interacts with DYS1 and LIA1. Lys-51 undergoes hypusination, a unique post-translational modification that consists in the addition of a butylamino group from spermidine to lysine side chain, leading to the formation of the unusual amino acid hypusine. eIF-5As are the only known proteins to undergo this modification, which is essential for their function.

It is found in the cytoplasm. Its function is as follows. Translation factor that promotes translation elongation and termination, particularly upon ribosome stalling at specific amino acid sequence contexts. Binds between the exit (E) and peptidyl (P) site of the ribosome and promotes rescue of stalled ribosome: specifically required for efficient translation of polyproline-containing peptides as well as other motifs that stall the ribosome. Acts as a ribosome quality control (RQC) cofactor by joining the RQC complex to facilitate peptidyl transfer during CAT tailing step. Involved in actin dynamics and cell cycle progression, mRNA decay and probably in a pathway involved in stress response and maintenance of cell wall integrity. The sequence is that of Eukaryotic translation initiation factor 5A-1 (HYP2) from Saccharomyces cerevisiae (strain ATCC 204508 / S288c) (Baker's yeast).